The primary structure comprises 122 residues: Large ribosomal subunit protein bL12 (122 aa).

This sequence belongs to the bacterial ribosomal protein bL12 family. In terms of assembly, homodimer. Part of the ribosomal stalk of the 50S ribosomal subunit. Forms a multimeric L10(L12)X complex, where L10 forms an elongated spine to which 2 to 4 L12 dimers bind in a sequential fashion. Binds GTP-bound translation factors.

Functionally, forms part of the ribosomal stalk which helps the ribosome interact with GTP-bound translation factors. Is thus essential for accurate translation. In Stenotrophomonas maltophilia (strain R551-3), this protein is Large ribosomal subunit protein bL12.